The chain runs to 52 residues: Large ribosomal subunit protein bL33 (52 aa).

The protein belongs to the bacterial ribosomal protein bL33 family.

The sequence is that of Large ribosomal subunit protein bL33 from Chlamydia trachomatis serovar A (strain ATCC VR-571B / DSM 19440 / HAR-13).